The primary structure comprises 613 residues: Zinc metalloproteinase-disintegrin-like MTP4 (613 aa).

A signal peptide spans M1–S20. A propeptide spanning residues I21–L191 is cleaved from the precursor. Positions K205 to P401 constitute a Peptidase M12B domain. E208 serves as a coordination point for Ca(2+). The N-linked (GlcNAc...) asparagine glycan is linked to N282. D292 contacts Ca(2+). Disulfide bonds link C316-C396, C356-C380, and C358-C363. Zn(2+) is bound by residues H341, H345, and H351. Ca(2+) is bound by residues C396, N399, N414, F416, E418, E421, and D424. Residues P409–N495 enclose the Disintegrin domain. Disulfide bonds link C412–C441, C423–C436, C425–C431, C435–C458, C449–C455, C454–C480, C467–C487, C474–C506, C499–C511, C518–C568, C533–C575, C543–C577, C546–C556, C563–C601, and C595–C606. N437 is a glycosylation site (N-linked (GlcNAc...) asparagine). A D/ECD-tripeptide motif is present at residues D473–D475. 4 residues coordinate Ca(2+): D475, L476, E478, and D490. A hypervariable region that may play important roles toward cell migration region spans residues K561–T574. N572 carries an N-linked (GlcNAc...) asparagine glycan.

This sequence belongs to the venom metalloproteinase (M12B) family. P-III subfamily. As to quaternary structure, monomer. Requires Zn(2+) as cofactor. In terms of tissue distribution, expressed by the venom gland.

It localises to the secreted. Its function is as follows. Snake venom zinc metalloproteinase that may impair hemostasis in the prey. The chain is Zinc metalloproteinase-disintegrin-like MTP4 from Drysdalia coronoides (White-lipped snake).